Consider the following 829-residue polypeptide: Periplasmic nitrate reductase (829 aa).

A signal peptide (tat-type signal) is located at residues 1 to 36 (MARRDFIKQTAAAAAATVAGVPLTGYTQNIVTESEA). The region spanning 39–95 (LKWSKAPCRFCGTGCGVNVAVKDNQVVATHGDFNAEVNKGLNCVKGYFLSKIMYGSD) is the 4Fe-4S Mo/W bis-MGD-type domain. Residues Cys46, Cys49, Cys53, and Cys81 each coordinate [4Fe-4S] cluster. Residues Lys83, Gln150, Asn175, Cys179, 212-219 (WGSNMAEM), 243-247 (STFEH), 262-264 (QSD), Met373, Gln377, Asn483, 509-510 (SD), Lys532, Asp559, and 719-728 (TGRVLEHWHS) each bind Mo-bis(molybdopterin guanine dinucleotide). Trp795 contacts substrate. Mo-bis(molybdopterin guanine dinucleotide) is bound by residues Asn803 and Lys820.

The protein belongs to the prokaryotic molybdopterin-containing oxidoreductase family. NasA/NapA/NarB subfamily. Component of the periplasmic nitrate reductase NapAB complex composed of NapA and NapB. The cofactor is [4Fe-4S] cluster. It depends on Mo-bis(molybdopterin guanine dinucleotide) as a cofactor. In terms of processing, predicted to be exported by the Tat system. The position of the signal peptide cleavage has not been experimentally proven.

The protein resides in the periplasm. The catalysed reaction is 2 Fe(II)-[cytochrome] + nitrate + 2 H(+) = 2 Fe(III)-[cytochrome] + nitrite + H2O. In terms of biological role, catalytic subunit of the periplasmic nitrate reductase complex NapAB. Receives electrons from NapB and catalyzes the reduction of nitrate to nitrite. The polypeptide is Periplasmic nitrate reductase (Bordetella bronchiseptica (strain ATCC BAA-588 / NCTC 13252 / RB50) (Alcaligenes bronchisepticus)).